Reading from the N-terminus, the 172-residue chain is Adenine phosphoribosyltransferase (172 aa).

Belongs to the purine/pyrimidine phosphoribosyltransferase family. In terms of assembly, homodimer.

It localises to the cytoplasm. It carries out the reaction AMP + diphosphate = 5-phospho-alpha-D-ribose 1-diphosphate + adenine. Its pathway is purine metabolism; AMP biosynthesis via salvage pathway; AMP from adenine: step 1/1. Functionally, catalyzes a salvage reaction resulting in the formation of AMP, that is energically less costly than de novo synthesis. In Streptococcus thermophilus (strain ATCC BAA-250 / LMG 18311), this protein is Adenine phosphoribosyltransferase.